The sequence spans 1197 residues: DExH-box ATP-dependent RNA helicase DExH3 (1197 aa).

The Helicase ATP-binding domain maps to 309-476 (LKAIAANQVV…FGGAPAMHIP (168 aa)). Residue 322–329 (GETGCGKT) coordinates ATP. The short motif at 423-426 (DEIH) is the DEIH box element. Residues 564-738 (LIENVLCHIV…SLCLQIKSLG (175 aa)) form the Helicase C-terminal domain.

The protein belongs to the DExH box helicase family.

It carries out the reaction ATP + H2O = ADP + phosphate + H(+). The chain is DExH-box ATP-dependent RNA helicase DExH3 from Arabidopsis thaliana (Mouse-ear cress).